The chain runs to 207 residues: Outer-membrane lipoprotein LolB (207 aa).

The signal sequence occupies residues 1 to 21 (MPLPDFRLIRLLPLAALVLTA). Residue cysteine 22 is the site of N-palmitoyl cysteine attachment. Residue cysteine 22 is the site of S-diacylglycerol cysteine attachment.

The protein belongs to the LolB family. In terms of assembly, monomer.

It is found in the cell outer membrane. Plays a critical role in the incorporation of lipoproteins in the outer membrane after they are released by the LolA protein. In Escherichia coli (strain SMS-3-5 / SECEC), this protein is Outer-membrane lipoprotein LolB.